A 116-amino-acid chain; its full sequence is Large ribosomal subunit protein bL19 (116 aa).

It belongs to the bacterial ribosomal protein bL19 family.

Its function is as follows. This protein is located at the 30S-50S ribosomal subunit interface and may play a role in the structure and function of the aminoacyl-tRNA binding site. The sequence is that of Large ribosomal subunit protein bL19 (rplS) from Geobacillus stearothermophilus (Bacillus stearothermophilus).